The primary structure comprises 353 residues: Phosphate acyltransferase (353 aa).

The protein belongs to the PlsX family. Homodimer. Probably interacts with PlsY.

It is found in the cytoplasm. It carries out the reaction a fatty acyl-[ACP] + phosphate = an acyl phosphate + holo-[ACP]. It functions in the pathway lipid metabolism; phospholipid metabolism. Its function is as follows. Catalyzes the reversible formation of acyl-phosphate (acyl-PO(4)) from acyl-[acyl-carrier-protein] (acyl-ACP). This enzyme utilizes acyl-ACP as fatty acyl donor, but not acyl-CoA. The polypeptide is Phosphate acyltransferase (Bradyrhizobium sp. (strain BTAi1 / ATCC BAA-1182)).